Reading from the N-terminus, the 796-residue chain is Choline transporter-like 2 (796 aa).

Residue N20 is glycosylated (N-linked (GlcNAc...) asparagine). A helical transmembrane segment spans residues P35–I55. N209 and N284 each carry an N-linked (GlcNAc...) asparagine glycan. The next 4 membrane-spanning stretches (helical) occupy residues W304–L324, I332–V352, L386–L406, and V431–V451. N-linked (GlcNAc...) asparagine glycosylation is found at N488 and N520. The next 5 membrane-spanning stretches (helical) occupy residues V542–S562, F585–I605, A626–F648, F691–F711, and I724–G744.

This sequence belongs to the CTL (choline transporter-like) family.

The protein resides in the membrane. This Drosophila melanogaster (Fruit fly) protein is Choline transporter-like 2.